Here is a 182-residue protein sequence, read N- to C-terminus: ATP synthase subunit delta (182 aa).

This sequence belongs to the ATPase delta chain family. In terms of assembly, F-type ATPases have 2 components, F(1) - the catalytic core - and F(0) - the membrane proton channel. F(1) has five subunits: alpha(3), beta(3), gamma(1), delta(1), epsilon(1). F(0) has three main subunits: a(1), b(2) and c(10-14). The alpha and beta chains form an alternating ring which encloses part of the gamma chain. F(1) is attached to F(0) by a central stalk formed by the gamma and epsilon chains, while a peripheral stalk is formed by the delta and b chains.

It is found in the cell membrane. Functionally, f(1)F(0) ATP synthase produces ATP from ADP in the presence of a proton or sodium gradient. F-type ATPases consist of two structural domains, F(1) containing the extramembraneous catalytic core and F(0) containing the membrane proton channel, linked together by a central stalk and a peripheral stalk. During catalysis, ATP synthesis in the catalytic domain of F(1) is coupled via a rotary mechanism of the central stalk subunits to proton translocation. In terms of biological role, this protein is part of the stalk that links CF(0) to CF(1). It either transmits conformational changes from CF(0) to CF(1) or is implicated in proton conduction. The chain is ATP synthase subunit delta from Lactobacillus johnsonii (strain CNCM I-12250 / La1 / NCC 533).